We begin with the raw amino-acid sequence, 367 residues long: (E)-2-epi-beta-caryophyllene synthase (367 aa).

Residues Asp-93, Asn-234, and Ser-238 each coordinate Mg(2+). A DDXXE motif motif is present at residues Asp-93–Glu-97.

This sequence belongs to the terpene synthase family. The cofactor is Mg(2+). Requires Mn(2+) as cofactor.

The catalysed reaction is (2E,6E)-farnesyl diphosphate = (E)-2-epi-beta-caryophyllene + diphosphate. The protein operates within secondary metabolite biosynthesis; terpenoid biosynthesis. In terms of biological role, sesquiterpene synthase converting farnesyl diphosphate to (E)-2-epi-beta-caryophyllene as the major product, and to two other unidentified sesquiterpenes. Has no diterpene synthase activity. The protein is (E)-2-epi-beta-caryophyllene synthase of Selaginella moellendorffii (Spikemoss).